The primary structure comprises 230 residues: Large ribosomal subunit protein uL1c (230 aa).

It belongs to the universal ribosomal protein uL1 family. As to quaternary structure, part of the 50S ribosomal subunit.

The protein localises to the plastid. Its subcellular location is the chloroplast. Binds directly to 23S rRNA. Might be involved in E site tRNA release (Potential). The protein is Large ribosomal subunit protein uL1c (rpl1) of Phaeodactylum tricornutum (strain CCAP 1055/1).